We begin with the raw amino-acid sequence, 221 residues long: Orotate phosphoribosyltransferase (221 aa).

Lysine 26 lines the 5-phospho-alpha-D-ribose 1-diphosphate pocket. 34 to 35 serves as a coordination point for orotate; sequence FF. 5-phospho-alpha-D-ribose 1-diphosphate is bound by residues 72-73, arginine 99, lysine 100, lysine 103, histidine 105, and 124-132; these read YK and DDVITAGTA. Orotate is bound by residues threonine 128 and arginine 156.

It belongs to the purine/pyrimidine phosphoribosyltransferase family. PyrE subfamily. Homodimer. Mg(2+) is required as a cofactor.

The enzyme catalyses orotidine 5'-phosphate + diphosphate = orotate + 5-phospho-alpha-D-ribose 1-diphosphate. It participates in pyrimidine metabolism; UMP biosynthesis via de novo pathway; UMP from orotate: step 1/2. Its function is as follows. Catalyzes the transfer of a ribosyl phosphate group from 5-phosphoribose 1-diphosphate to orotate, leading to the formation of orotidine monophosphate (OMP). In Colwellia psychrerythraea (strain 34H / ATCC BAA-681) (Vibrio psychroerythus), this protein is Orotate phosphoribosyltransferase.